The following is a 426-amino-acid chain: UDP-N-acetylglucosamine 1-carboxyvinyltransferase (426 aa).

Residue 22 to 23 coordinates phosphoenolpyruvate; the sequence is KN. Position 99 (Arg99) interacts with UDP-N-acetyl-alpha-D-glucosamine. Cys123 acts as the Proton donor in catalysis. The residue at position 123 (Cys123) is a 2-(S-cysteinyl)pyruvic acid O-phosphothioketal. UDP-N-acetyl-alpha-D-glucosamine contacts are provided by residues 128–132, Asp313, and Ile335; that span reads RPIDL.

Belongs to the EPSP synthase family. MurA subfamily.

It localises to the cytoplasm. It catalyses the reaction phosphoenolpyruvate + UDP-N-acetyl-alpha-D-glucosamine = UDP-N-acetyl-3-O-(1-carboxyvinyl)-alpha-D-glucosamine + phosphate. The protein operates within cell wall biogenesis; peptidoglycan biosynthesis. Cell wall formation. Adds enolpyruvyl to UDP-N-acetylglucosamine. This chain is UDP-N-acetylglucosamine 1-carboxyvinyltransferase, found in Zymomonas mobilis subsp. mobilis (strain ATCC 31821 / ZM4 / CP4).